Here is a 685-residue protein sequence, read N- to C-terminus: Hemocyanin subunit X (685 aa).

Positions 1 to 20 (MKYCTESLILILAVIGCISA) are cleaved as a signal peptide. Cu cation contacts are provided by histidine 210, histidine 214, and histidine 243. A glycan (N-linked (GlcNAc...) asparagine) is linked at asparagine 329. Cu cation-binding residues include histidine 367, histidine 371, and histidine 407. A disulfide bridge connects residues cysteine 577 and cysteine 625.

The protein belongs to the tyrosinase family. Hemocyanin subfamily.

The protein localises to the secreted. It localises to the extracellular space. Its function is as follows. Hemocyanins are copper-containing oxygen carriers occurring freely dissolved in the hemolymph of many mollusks and arthropods. The sequence is that of Hemocyanin subunit X (HCX) from Scutigera coleoptrata (House centipede).